Consider the following 597-residue polypeptide: Bile salt-activated lipase (597 aa).

The first 18 residues, Leu-1 to Ala-18, serve as a signal peptide directing secretion. Cys-82 and Cys-98 are disulfide-bonded. A glycan (N-linked (GlcNAc...) asparagine) is linked at Asn-205. Residue Ser-212 is the Acyl-ester intermediate of the active site. An intrachain disulfide couples Cys-264 to Cys-275. Asp-338 functions as the Charge relay system in the catalytic mechanism. A glycan (N-linked (GlcNAc...) asparagine) is linked at Asn-379. The Charge relay system role is filled by His-453. Residues Ala-553–Met-591 form a disordered region.

This sequence belongs to the type-B carboxylesterase/lipase family. As to quaternary structure, interacts with CLC.

It is found in the secreted. It catalyses the reaction a triacylglycerol + H2O = a diacylglycerol + a fatty acid + H(+). The enzyme catalyses 1,2,3-tri-(9Z-octadecenoyl)-glycerol + H2O = di-(9Z)-octadecenoylglycerol + (9Z)-octadecenoate + H(+). It carries out the reaction 1,2,3-trioctanoylglycerol + H2O = dioctanoylglycerol + octanoate + H(+). The catalysed reaction is a sterol ester + H2O = a sterol + a fatty acid + H(+). It catalyses the reaction cholesteryl (9Z-octadecenoate) + H2O = cholesterol + (9Z)-octadecenoate + H(+). The enzyme catalyses an acetyl ester + H2O = an aliphatic alcohol + acetate + H(+). It carries out the reaction a butanoate ester + H2O = an aliphatic alcohol + butanoate + H(+). The catalysed reaction is 9-hexadecanoyloxy-octadecanoate + H2O = 9-hydroxy-octadecanoate + hexadecanoate + H(+). It catalyses the reaction 9-(9Z-octadecenoyloxy)-octadecanoate + H2O = 9-hydroxy-octadecanoate + (9Z)-octadecenoate + H(+). The enzyme catalyses 1-hexadecanoyl-sn-glycero-3-phosphocholine + H2O = sn-glycerol 3-phosphocholine + hexadecanoate + H(+). It carries out the reaction 12-hexadecanoyloxy-octadecanoate + H2O = 12-hydroxyoctadecanoate + hexadecanoate + H(+). The catalysed reaction is 12-(9Z-octadecenoyloxy)-octadecanoate + H2O = 12-hydroxyoctadecanoate + (9Z)-octadecenoate + H(+). It catalyses the reaction 13-(9Z-octadecenoyloxy)-octadecanoate + H2O = 13-hydroxy-octadecanoate + (9Z)-octadecenoate + H(+). The enzyme catalyses 9-(9Z-hexadecenoyloxy)-octadecanoate + H2O = (9Z)-hexadecenoate + 9-hydroxy-octadecanoate + H(+). It carries out the reaction 12-(9Z-hexadecenoyloxy)-octadecanoate + H2O = 12-hydroxyoctadecanoate + (9Z)-hexadecenoate + H(+). The catalysed reaction is 13-(9Z-hexadecenoyloxy)-octadecanoate + H2O = 13-hydroxy-octadecanoate + (9Z)-hexadecenoate + H(+). It catalyses the reaction 12-octadecanoyloxy-octadecanoate + H2O = 12-hydroxyoctadecanoate + octadecanoate + H(+). The enzyme catalyses 13-octadecanoyloxy-octadecanoate + H2O = 13-hydroxy-octadecanoate + octadecanoate + H(+). It carries out the reaction 5-(9Z-hexadecenoyloxy)-octadecanoate + H2O = 5-hydroxy-octadecanoate + (9Z)-hexadecenoate + H(+). The catalysed reaction is 9-octadecanoyloxy-octadecanoate + H2O = 9-hydroxy-octadecanoate + octadecanoate + H(+). With respect to regulation, activated by bile salts such as sodium taurocholate. Its function is as follows. Catalyzes the hydrolysis of a wide range of substrates including cholesteryl esters, phospholipids, lysophospholipids, di- and tri-acylglycerols, and fatty acid esters of hydroxy fatty acids (FAHFA). Preferentially hydrolyzes FAHFAs with the ester bond further away from the carboxylate. Unsaturated FAHFAs are hydrolyzed more quickly than saturated FAHFAs. Has an essential role in the complete digestion of dietary lipids and their intestinal absorption, along with the absorption of fat-soluble vitamins. This Bos taurus (Bovine) protein is Bile salt-activated lipase (CEL).